A 2245-amino-acid chain; its full sequence is Myosin-J heavy chain (2245 aa).

The region spanning 25-77 (QEGAGVWIPDQELGWIGADVIEHSETSADQVLVRTEDDREVKIPLSKVFQKNP) is the Myosin N-terminal SH3-like domain. The Myosin motor domain occupies 81-821 (EGVDDLSFLS…QLASLEDMRL (741 aa)). 174 to 181 (GESGAGKT) provides a ligand contact to ATP. The tract at residues 646 to 672 (FTQSPGGHPQGNGGPTSSNTKGTSGSS) is disordered. Positions 660–672 (PTSSNTKGTSGSS) are enriched in low complexity. Residues 669 to 749 (SGSSSMKFLS…GFPTRRLLSE (81 aa)) form an actin-binding region. 3 IQ domains span residues 824–851 (LDRS…RDAS), 872–901 (RTHS…ASLQ), and 943–972 (KLRG…EARS). The stretch at 973-1812 (LRTVQEQKNK…NYHMLEDRME (840 aa)) forms a coiled coil. The disordered stretch occupies residues 1504–1524 (KKQLTQLQQQHEQSSTQLLLA). A compositionally biased stretch (low complexity) spans 1506–1523 (QLTQLQQQHEQSSTQLLL). Residues 1969–2188 (IDFIDQLQQS…IASICPPNKS (220 aa)) enclose the Dilute domain.

The protein belongs to the TRAFAC class myosin-kinesin ATPase superfamily. Myosin family. As to quaternary structure, homodimer that associates with six light chains.

It is found in the contractile vacuole. Its function is as follows. Processive motor protein that can move over long distances along F-actin without disassociating; processiveness depends on high physiological Mg(2+) concentrations. Presents a high actin affinity in the presence of ADP, fast ATP hydrolysis, and a high steady-state ATPase activity in the presence of actin that is rate limited by ADP release. Physiological decrease of free Mg(2+) ions leads to an increased rate of ADP release and shortening of the fraction of time it spends in the strong acting binding states. This Dictyostelium discoideum (Social amoeba) protein is Myosin-J heavy chain (myoJ).